A 445-amino-acid polypeptide reads, in one-letter code: Bifunctional protein GlmU (445 aa).

The tract at residues 1–218 is pyrophosphorylase; sequence MRALVLAAGK…LLEITGVNTR (218 aa). UDP-N-acetyl-alpha-D-glucosamine contacts are provided by residues 6–9, Lys20, Gln69, 74–75, 96–98, Gly134, Glu147, Asn162, and Asn216; these read LAAG, GT, and YGD. Residue Asp98 coordinates Mg(2+). Asn216 provides a ligand contact to Mg(2+). The tract at residues 219–239 is linker; that stretch reads KTLVWLEEQLRMRKIEELLEN. The interval 240–445 is N-acetyltransferase; it reads GVTILDPATT…GWVLKKRKEE (206 aa). UDP-N-acetyl-alpha-D-glucosamine is bound by residues Arg321 and Lys339. The Proton acceptor role is filled by His351. Residues Tyr354 and Asn365 each contribute to the UDP-N-acetyl-alpha-D-glucosamine site. Residues Ala368, 374–375, Ser393, Ala411, and Arg428 contribute to the acetyl-CoA site; that span reads NY.

In the N-terminal section; belongs to the N-acetylglucosamine-1-phosphate uridyltransferase family. This sequence in the C-terminal section; belongs to the transferase hexapeptide repeat family. In terms of assembly, homotrimer. Requires Mg(2+) as cofactor.

The protein localises to the cytoplasm. The catalysed reaction is alpha-D-glucosamine 1-phosphate + acetyl-CoA = N-acetyl-alpha-D-glucosamine 1-phosphate + CoA + H(+). It catalyses the reaction N-acetyl-alpha-D-glucosamine 1-phosphate + UTP + H(+) = UDP-N-acetyl-alpha-D-glucosamine + diphosphate. It participates in nucleotide-sugar biosynthesis; UDP-N-acetyl-alpha-D-glucosamine biosynthesis; N-acetyl-alpha-D-glucosamine 1-phosphate from alpha-D-glucosamine 6-phosphate (route II): step 2/2. The protein operates within nucleotide-sugar biosynthesis; UDP-N-acetyl-alpha-D-glucosamine biosynthesis; UDP-N-acetyl-alpha-D-glucosamine from N-acetyl-alpha-D-glucosamine 1-phosphate: step 1/1. It functions in the pathway bacterial outer membrane biogenesis; LPS lipid A biosynthesis. Its function is as follows. Catalyzes the last two sequential reactions in the de novo biosynthetic pathway for UDP-N-acetylglucosamine (UDP-GlcNAc). The C-terminal domain catalyzes the transfer of acetyl group from acetyl coenzyme A to glucosamine-1-phosphate (GlcN-1-P) to produce N-acetylglucosamine-1-phosphate (GlcNAc-1-P), which is converted into UDP-GlcNAc by the transfer of uridine 5-monophosphate (from uridine 5-triphosphate), a reaction catalyzed by the N-terminal domain. In Thermotoga petrophila (strain ATCC BAA-488 / DSM 13995 / JCM 10881 / RKU-1), this protein is Bifunctional protein GlmU.